The chain runs to 391 residues: Phosphoglycerate kinase (391 aa).

Substrate contacts are provided by residues Asp21–Asn23, Arg36, His59–Arg62, Arg113, and Arg146. Residues Lys197, Glu319, and Gly345–Thr348 each bind ATP.

It belongs to the phosphoglycerate kinase family. As to quaternary structure, monomer.

It localises to the cytoplasm. The catalysed reaction is (2R)-3-phosphoglycerate + ATP = (2R)-3-phospho-glyceroyl phosphate + ADP. The protein operates within carbohydrate degradation; glycolysis; pyruvate from D-glyceraldehyde 3-phosphate: step 2/5. In Pseudoalteromonas atlantica (strain T6c / ATCC BAA-1087), this protein is Phosphoglycerate kinase.